Here is a 113-residue protein sequence, read N- to C-terminus: Protein S100-A9 (113 aa).

A2 is modified (N-acetylalanine). EF-hand domains are found at residues 13-48 (ITTI…QLAT) and 55-90 (RNEA…LIFA). H21 contacts Zn(2+). 2 residues coordinate Ca(2+): S24 and H29. A Zn(2+)-binding site is contributed by D31. 7 residues coordinate Ca(2+): T32, E37, D68, N70, D72, Q74, and E79. Zn(2+)-binding residues include H92 and H96. Pros-methylhistidine is present on H107.

This sequence belongs to the S-100 family. In terms of assembly, homodimer. Preferentially exists as a heterodimer or heterotetramer with S100A8 known as calprotectin (S100A8/A9). S100A9 interacts with ATP2A2. S100A9 interacts with AGER, and with the heterodimeric complex formed by TLR4 and LY96 in the presence of calcium and/or zinc ions. S100A9 binds quinoline-3-carboxamides in the presence of calcium and/or zinc ions. S100A9 interacts with amyloid-beta protein 40. Calprotectin (S100A8/9) interacts with CEACAM3 and tubulin filaments in a calcium-dependent manner. Heterotetrameric calprotectin (S100A8/A9) interacts with ANXA6 and associates with tubulin filaments in activated monocytes. Calprotectin (S100A8/9) interacts with NCF2/P67PHOX, RAC1, RAC2, CYBA and CYBB. Calprotectin (S100A8/9) interacts with NOS2 to form the iNOS-S100A8/A9 transnitrosylase complex; induced by LDL(ox). Calprotectin (S100A8/9) interacts with CD69. In terms of processing, phosphorylated. Phosphorylation inhibits activation of tubulin polymerization. Methylation at His-107 by METTL9 reduces zinc-binding without affecting heterodimerization with S100A8.

It is found in the secreted. Its subcellular location is the cytoplasm. The protein resides in the cytoskeleton. The protein localises to the cell membrane. Functionally, S100A9 is a calcium- and zinc-binding protein which plays a prominent role in the regulation of inflammatory processes and immune response. It can induce neutrophil chemotaxis, adhesion, can increase the bactericidal activity of neutrophils by promoting phagocytosis via activation of SYK, PI3K/AKT, and ERK1/2 and can induce degranulation of neutrophils by a MAPK-dependent mechanism. Predominantly found as calprotectin (S100A8/A9) which has a wide plethora of intra- and extracellular functions. The intracellular functions include: facilitating leukocyte arachidonic acid trafficking and metabolism, modulation of the tubulin-dependent cytoskeleton during migration of phagocytes and activation of the neutrophilic NADPH-oxidase. Also participates in regulatory T-cell differentiation together with CD69. Activates NADPH-oxidase by facilitating the enzyme complex assembly at the cell membrane, transferring arachidonic acid, an essential cofactor, to the enzyme complex and S100A8 contributes to the enzyme assembly by directly binding to NCF2/P67PHOX. The extracellular functions involve pro-inflammatory, antimicrobial, oxidant-scavenging and apoptosis-inducing activities. Its pro-inflammatory activity includes recruitment of leukocytes, promotion of cytokine and chemokine production, and regulation of leukocyte adhesion and migration. Acts as an alarmin or a danger associated molecular pattern (DAMP) molecule and stimulates innate immune cells via binding to pattern recognition receptors such as Toll-like receptor 4 (TLR4) and receptor for advanced glycation endproducts (AGER). Binding to TLR4 and AGER activates the MAP-kinase and NF-kappa-B signaling pathways resulting in the amplification of the pro-inflammatory cascade. Has antimicrobial activity towards bacteria and fungi and exerts its antimicrobial activity probably via chelation of Zn(2+) which is essential for microbial growth. Can induce cell death via autophagy and apoptosis and this occurs through the cross-talk of mitochondria and lysosomes via reactive oxygen species (ROS) and the process involves BNIP3. Can regulate neutrophil number and apoptosis by an anti-apoptotic effect; regulates cell survival via ITGAM/ITGB and TLR4 and a signaling mechanism involving MEK-ERK. Its role as an oxidant scavenger has a protective role in preventing exaggerated tissue damage by scavenging oxidants. The iNOS-S100A8/A9 transnitrosylase complex is proposed to direct selective inflammatory stimulus-dependent S-nitrosylation of multiple targets such as GAPDH, NXA5, EZR, MSN and VIM by recognizing a [IL]-x-C-x-x-[DE] motif. This chain is Protein S100-A9 (S100a9), found in Mus musculus (Mouse).